An 80-amino-acid chain; its full sequence is Putative defensin-like protein 28 (80 aa).

A signal peptide spans 1–22 (MLRANVVVSLVIFAALMQCMNG).

This sequence belongs to the DEFL family.

Its subcellular location is the secreted. The polypeptide is Putative defensin-like protein 28 (Arabidopsis thaliana (Mouse-ear cress)).